Consider the following 92-residue polypeptide: Small ribosomal subunit protein uS19 (92 aa).

The protein belongs to the universal ribosomal protein uS19 family.

Protein S19 forms a complex with S13 that binds strongly to the 16S ribosomal RNA. This chain is Small ribosomal subunit protein uS19, found in Methylocella silvestris (strain DSM 15510 / CIP 108128 / LMG 27833 / NCIMB 13906 / BL2).